Reading from the N-terminus, the 402-residue chain is Formate-dependent phosphoribosylglycinamide formyltransferase (402 aa).

N(1)-(5-phospho-beta-D-ribosyl)glycinamide contacts are provided by residues 25 to 26 (EL) and E85. Residues R118, K159, 164–169 (SSGKGQ), 199–202 (EQFV), and E207 each bind ATP. In terms of domain architecture, ATP-grasp spans 123 to 318 (RLASEELGLP…EFELHAKAVL (196 aa)). Mg(2+)-binding residues include E277 and E289. Residues D296, K365, and 372 to 373 (RR) contribute to the N(1)-(5-phospho-beta-D-ribosyl)glycinamide site.

Belongs to the PurK/PurT family. As to quaternary structure, homodimer.

The enzyme catalyses N(1)-(5-phospho-beta-D-ribosyl)glycinamide + formate + ATP = N(2)-formyl-N(1)-(5-phospho-beta-D-ribosyl)glycinamide + ADP + phosphate + H(+). It participates in purine metabolism; IMP biosynthesis via de novo pathway; N(2)-formyl-N(1)-(5-phospho-D-ribosyl)glycinamide from N(1)-(5-phospho-D-ribosyl)glycinamide (formate route): step 1/1. Involved in the de novo purine biosynthesis. Catalyzes the transfer of formate to 5-phospho-ribosyl-glycinamide (GAR), producing 5-phospho-ribosyl-N-formylglycinamide (FGAR). Formate is provided by PurU via hydrolysis of 10-formyl-tetrahydrofolate. This Corynebacterium efficiens (strain DSM 44549 / YS-314 / AJ 12310 / JCM 11189 / NBRC 100395) protein is Formate-dependent phosphoribosylglycinamide formyltransferase.